A 385-amino-acid polypeptide reads, in one-letter code: Basigin (385 aa).

An N-terminal signal peptide occupies residues 1–21; sequence MAAALFVLLGFALLGTHGASG. An Ig-like domain is found at 37-120; the sequence is GGSVELHCEA…SNDPDRNHLT (84 aa). 3 disulfides stabilise this stretch: Cys-44–Cys-108, Cys-157–Cys-203, and Cys-242–Cys-301. The 82-residue stretch at 138-219 folds into the Ig-like C2-type domain; that stretch reads EPGTVFTTVE…MGTANIQLHG (82 aa). The Extracellular segment spans residues 138 to 323; it reads EPGTVFTTVE…ITLRVRSHLA (186 aa). An N-linked (GlcNAc...) asparagine glycan is attached at Asn-160. Residues 195-199 are essential for interaction with KDR/VEGFR2; it reads DDQWG. Residues 221 to 315 enclose the Ig-like V-type domain; that stretch reads PRVKAVKSSE…SKGSDQAIIT (95 aa). Asn-268 and Asn-302 each carry an N-linked (GlcNAc...) asparagine glycan. A helical membrane pass occupies residues 324 to 344; sequence ALWPFLGIVAEVLVLVTIIFI. Over 345–385 the chain is Cytoplasmic; that stretch reads YEKRRKPEDVLDDDDAGSAPLKSSGQHQNDKGKNVRQRNSS. The segment at 353-385 is disordered; sequence DVLDDDDAGSAPLKSSGQHQNDKGKNVRQRNSS. Residues Ser-362 and Ser-368 each carry the phosphoserine modification.

Homooligomer. Interacts with NXNL1. Interacts with SLC2A1 and SLC16A1/GLUT1. Interacts with XKR8; promoting its localization at the cell membrane. As to quaternary structure, (Microbial infection) Interacts with P.falciparum (isolate 3D7) RH5/PfRH5; the interaction is required for the invasion of the host erythrocytes by the parasite at the merozoite stage. In terms of assembly, homooligomer. Forms heterooligomers with isoform 3. Interacts with VEGFA and KDR/VEGFR2. Interacts with PPIA/CYPA. Interacts with PPIL2; regulates BSG transport to the cell membrane. Interacts with SLC16A1; interaction mediates SLC16A3 targeting to the plasma membrane. Interacts with SLC16A12. Interacts with SLC16A11. Interacts with AJAP1. Interacts with SLC1A3, ATP1B2, MAG and L1CAM. Interacts with SLC16A3; interaction mediates SLC16A3 targeting to the plasma membrane. (Microbial infection) Interacts with P.falciparum (isolates 3D7 or 7G8) RH5/PfRH5; the interaction is required for the invasion of the host erythrocytes by the parasite at the merozoite stage. As to quaternary structure, (Microbial infection) Does not interact with severe acute respiratory syndrome coronavirus 2 (SARS-CoV-2) spike glycoprotein, even if previous works were based on a putative interaction. In terms of assembly, forms heterooligomers with isoform 2. Interacts with SLC16A6; this interaction mediates targeting to the plasma membrane. N-glycosylated. Retina-specific. Expressed in retinal cone photoreceptors (at protein level). As to expression, expressed in erythrocytes (at protein level). Highly expressed in melanoma cell lines (at protein level). Highly expressed in the heart, kidney, skeletal muscle and testis. In terms of tissue distribution, highly expressed in the bone marrow, fetal liver, lung, testis and thymus.

It localises to the melanosome. Its subcellular location is the cell membrane. It is found in the photoreceptor inner segment. The protein resides in the cell projection. The protein localises to the cilium. It localises to the photoreceptor outer segment. Its subcellular location is the endosome. It is found in the endoplasmic reticulum membrane. The protein resides in the basolateral cell membrane. Its function is as follows. Essential for normal retinal maturation and development. Acts as a retinal cell surface receptor for NXNL1 and plays an important role in NXNL1-mediated survival of retinal cone photoreceptors. In association with glucose transporter SLC16A1/GLUT1 and NXNL1, promotes retinal cone survival by enhancing aerobic glycolysis and accelerating the entry of glucose into photoreceptors. May act as a potent stimulator of IL6 secretion in multiple cell lines that include monocytes. Functionally, (Microbial infection) Erythrocyte receptor for P.falciparum RH5 which is essential for erythrocyte invasion by the merozoite stage of P.falciparum isolates 3D7 and Dd2. In terms of biological role, signaling receptor for cyclophilins, essential for PPIA/CYPA and PPIB/CYPB-dependent signaling related to chemotaxis and adhesion of immune cells. Plays an important role in targeting monocarboxylate transporters SLC16A1/GLUT1, SLC16A11 and SLC16A12 to the plasma membrane. Acts as a coreceptor for vascular endothelial growth factor receptor 2 (KDR/VEGFR2) in endothelial cells enhancing its VEGFA-mediated activation and downstream signaling. Promotes angiogenesis through EPAS1/HIF2A-mediated up-regulation of VEGFA (isoform VEGF-165 and VEGF-121) and KDR/VEGFR2 in endothelial cells. Plays a key role in regulating tumor growth, invasion, metastasis and neoangiogenesis by stimulating the production and release of extracellular matrix metalloproteinases and KDR/VEGFR2 by both tumor cells and stromal cells (fibroblasts and endothelial cells). (Microbial infection) Erythrocyte receptor for P.falciparum RH5 which is essential for erythrocyte invasion by the merozoite stage of P.falciparum isolates 3D7, Dd2, 7G8 and HB3. Binding of P.falciparum RH5 results in BSG dimerization which triggers an increase in intracellular Ca(2+) in the erythrocyte. This essential step leads to a rearrangement of the erythrocyte cytoskeleton required for the merozoite invasion. Its function is as follows. (Microbial infection) Can facilitate human SARS coronavirus (SARS-CoV-1) infection via its interaction with virus-associated PPIA/CYPA. Functionally, (Microbial infection) Can facilitate HIV-1 infection via its interaction with virus-associated PPIA/CYPA. In terms of biological role, (Microbial infection) First described as a receptor for severe acute respiratory syndrome coronavirus 2 (SARS-CoV-2), it is not required for SARS-CoV-2 infection. (Microbial infection) Acts as a receptor for measles virus. Its function is as follows. (Microbial infection) Promotes entry of pentamer-expressing human cytomegalovirus (HCMV) into epithelial and endothelial cells. The sequence is that of Basigin from Homo sapiens (Human).